The primary structure comprises 170 residues: Adenine phosphoribosyltransferase (170 aa).

It belongs to the purine/pyrimidine phosphoribosyltransferase family. Homodimer.

Its subcellular location is the cytoplasm. It carries out the reaction AMP + diphosphate = 5-phospho-alpha-D-ribose 1-diphosphate + adenine. It participates in purine metabolism; AMP biosynthesis via salvage pathway; AMP from adenine: step 1/1. Functionally, catalyzes a salvage reaction resulting in the formation of AMP, that is energically less costly than de novo synthesis. In Thermotoga sp. (strain RQ2), this protein is Adenine phosphoribosyltransferase.